The primary structure comprises 477 residues: Protein DETOXIFICATION 5 (477 aa).

The next 12 helical transmembrane spans lie at 38–58 (AAPM…SVMV), 72–92 (LATA…VGAL), 113–133 (FSAI…WFYM), 146–166 (ISKV…AQAV), 187–207 (AITT…AFGL), 211–231 (GAAL…ALYV), 263–283 (AAMT…SGLL), 292–312 (VLSI…GIGA), 333–353 (AVFA…TLLF), 376–396 (LSSL…LDGV), 411–431 (VVAY…WGHM), and 436–456 (LWIG…IVTA).

The protein belongs to the multi antimicrobial extrusion (MATE) (TC 2.A.66.1) family.

It localises to the membrane. This chain is Protein DETOXIFICATION 5, found in Arabidopsis thaliana (Mouse-ear cress).